Here is a 367-residue protein sequence, read N- to C-terminus: MGSGYQLLQLPRERFRKTSFLVWVIILFQRAISMPLGIVTNSTLKATEIDQLVCRDKLSSTSQLKSVGLNLEGNGIATDVPSATKRWGFRSGVPPKVVSYEAGEWAENCYNLEIKKSDGSECLPLPPDGVRGFPRCRYVHKVQGTGPCPGDLAFHKNGAFFLYDRLASTVIYRGTTFTEGVVAFLILSEPKKHFWKATPAHEPVNTTDDSTSYYMTLTLSYEMSNFGGKESNTLFKVDNHTYVQLDRPHTPQFLVQLNETLRRNNRLSNSTGRLTWTLDPKIEPDVGEWAFWETKKTFPNNFMEKTCISKFYQPTPTTPQIRARRELSKEKLATTHPPTTPSWFQRIPLQWFQCSLQDGQRKCRPKV.

Positions 1-33 (MGSGYQLLQLPRERFRKTSFLVWVIILFQRAIS) are cleaved as a signal peptide. N-linked (GlcNAc...) asparagine; by host glycosylation occurs at Asn41. 2 disulfide bridges follow: Cys109–Cys136 and Cys122–Cys148. Residues Asn205, Asn239, Asn258, and Asn269 are each glycosylated (N-linked (GlcNAc...) asparagine; by host).

This sequence belongs to the filoviruses glycoprotein family. Homodimer; disulfide-linked. The homodimers are linked by two disulfide bonds in a parallel orientation. As to quaternary structure, monomer. Post-translationally, this precursor is processed into mature sGP and delta-peptide by host furin or furin-like proteases. The cleavage site corresponds to the furin optimal cleavage sequence [KR]-X-[KR]-R. In terms of processing, N-glycosylated. O-glycosylated.

The protein localises to the secreted. Seems to possess an anti-inflammatory activity as it can reverse the barrier-decreasing effects of TNF alpha. Might therefore contribute to the lack of inflammatory reaction seen during infection in spite the of extensive necrosis and massive virus production. Does not seem to be involved in activation of primary macrophages. Does not seem to interact specifically with neutrophils. Functionally, viroporin that permeabilizes mammalian cell plasma membranes. It acts by altering permeation of ionic compounds and small molecules. This activity may lead to viral enterotoxic activity. This is Pre-small/secreted glycoprotein (GP) from Reston ebolavirus (strain Siena/Philippine-92) (REBOV).